Here is a 159-residue protein sequence, read N- to C-terminus: Putative 4-hydroxy-4-methyl-2-oxoglutarate aldolase (159 aa).

Residues 74 to 77 and R96 contribute to the substrate site; that span reads GDNL. D97 provides a ligand contact to a divalent metal cation.

It belongs to the class II aldolase/RraA-like family. In terms of assembly, homotrimer. Requires a divalent metal cation as cofactor.

It carries out the reaction 4-hydroxy-4-methyl-2-oxoglutarate = 2 pyruvate. The enzyme catalyses oxaloacetate + H(+) = pyruvate + CO2. Functionally, catalyzes the aldol cleavage of 4-hydroxy-4-methyl-2-oxoglutarate (HMG) into 2 molecules of pyruvate. Also contains a secondary oxaloacetate (OAA) decarboxylase activity due to the common pyruvate enolate transition state formed following C-C bond cleavage in the retro-aldol and decarboxylation reactions. This chain is Putative 4-hydroxy-4-methyl-2-oxoglutarate aldolase, found in Bacillus cereus (strain ZK / E33L).